We begin with the raw amino-acid sequence, 281 residues long: AT-hook motif nuclear-localized protein 20 (281 aa).

2 disordered regions span residues 43-85 and 216-247; these read MNQS…APIF and MEEE…DLSG. A DNA-binding region (a.T hook) is located at residues 67–79; it reads RRPRGRPPGSKNK. A PPC domain is found at 91–229; that stretch reads PNALRSHVLE…EDGGGSRQIH (139 aa).

The protein localises to the nucleus. Transcription factor that specifically binds AT-rich DNA sequences related to the nuclear matrix attachment regions (MARs). Negatively regulates plant innate immunity (PTI) to pathogens through the down-regulation of the PAMP-triggered NHO1 and FRK1 expression. The chain is AT-hook motif nuclear-localized protein 20 from Arabidopsis thaliana (Mouse-ear cress).